Here is a 118-residue protein sequence, read N- to C-terminus: Ribonuclease P protein component (118 aa).

Belongs to the RnpA family. Consists of a catalytic RNA component (M1 or rnpB) and a protein subunit.

It carries out the reaction Endonucleolytic cleavage of RNA, removing 5'-extranucleotides from tRNA precursor.. Its function is as follows. RNaseP catalyzes the removal of the 5'-leader sequence from pre-tRNA to produce the mature 5'-terminus. It can also cleave other RNA substrates such as 4.5S RNA. The protein component plays an auxiliary but essential role in vivo by binding to the 5'-leader sequence and broadening the substrate specificity of the ribozyme. This Petrotoga mobilis (strain DSM 10674 / SJ95) protein is Ribonuclease P protein component.